The primary structure comprises 419 residues: Histidine--tRNA ligase (419 aa).

Belongs to the class-II aminoacyl-tRNA synthetase family. As to quaternary structure, homodimer.

It localises to the cytoplasm. The catalysed reaction is tRNA(His) + L-histidine + ATP = L-histidyl-tRNA(His) + AMP + diphosphate + H(+). The polypeptide is Histidine--tRNA ligase (Thermosipho melanesiensis (strain DSM 12029 / CIP 104789 / BI429)).